The primary structure comprises 3564 residues: CUB and sushi domain-containing protein 1 (3564 aa).

An N-terminal signal peptide occupies residues 1–26 (MTAWRRFQSLLLLLGLLVLCARLLTA). Over 27 to 3487 (AKGQNCGGLV…SHYHGTSSGS (3461 aa)) the chain is Extracellular. Intrachain disulfides connect C32–C58, C145–C185, C171–C202, C208–C234, C349–C389, C375–C406, C411–C437, C527–C567, C553–C580, and C584–C610. The CUB 1 domain maps to 32–140 (CGGLVQGPNG…QGFKALYEVL (109 aa)). N40 and N57 each carry an N-linked (GlcNAc...) asparagine glycan. The Sushi 1 domain maps to 143 to 204 (HTCGNPGEIL…WDFPAPFCRA (62 aa)). Residues 208–312 (CGGTLRGTSS…KGFNAQFQVK (105 aa)) enclose the CUB 2 domain. One can recognise a Sushi 2 domain in the interval 347–408 (DMCPDPGIPE…WSDHRPICRA (62 aa)). Positions 411–522 (CGSNLRGPSG…PGFKAVYQEI (112 aa)) constitute a CUB 3 domain. Residues 525 to 582 (GGCGDPGIPAYGKRTGSSFLHGDTLTFECPAAFELVGERVITCQQNNQWSGNKPSCVF) form the Sushi 3 domain. A CUB 4 domain is found at 584–692 (CFFNFTASSG…RGFNITYTTF (109 aa)). N-linked (GlcNAc...) asparagine glycans are attached at residues N587 and N686. One can recognise a Sushi 4 domain in the interval 695-756 (NECHDPGIPI…WSSTVPRCEA (62 aa)). 6 disulfide bridges follow: C697–C738, C723–C754, C758–C784, C873–C913, C899–C926, and C930–C956. The region spanning 758–866 (CGGHLTASSG…IGFLIHYESV (109 aa)) is the CUB 5 domain. Residues 871–928 (DSCLDPGIPVNGHRHGGDFGIRSTVTFSCDPGYTLSDDEPLVCERNHQWNHALPSCDA) enclose the Sushi 5 domain. A CUB 6 domain is found at 930–1040 (CGGYIQGKSG…EGFNITFSEY (111 aa)). N-linked (GlcNAc...) asparagine glycans are attached at residues N955, N1015, and N1034. The region spanning 1043–1102 (EPCDDPGVPAFSRRIGFHFGVGDSLTFSCFLGYRLEGATKLTCLGGGRRVWSAPLPRCVA) is the Sushi 6 domain. 3 disulfides stabilise this stretch: C1045–C1085, C1071–C1100, and C1104–C1130. Residues 1104–1212 (CGASVKGNEG…QGFQLTYTSF (109 aa)) enclose the CUB 7 domain. Residues N1184 and N1197 are each glycosylated (N-linked (GlcNAc...) asparagine). The region spanning 1215–1275 (VKCEDPGIPN…WDKPLPSCIA (61 aa)) is the Sushi 7 domain. Cystine bridges form between C1217/C1258, C1244/C1273, C1277/C1304, C1391/C1431, C1417/C1447, C1451/C1477, C1564/C1604, C1590/C1621, C1625/C1651, C1741/C1781, C1767/C1798, and C1802/C1828. A CUB 8 domain is found at 1277–1386 (CGGQIHAATS…SGFSIQFSTS (110 aa)). Positions 1389–1449 (ATCNDPGMPQ…WQPDPPTCIA (61 aa)) constitute a Sushi 8 domain. The N-linked (GlcNAc...) asparagine glycan is linked to N1399. The CUB 9 domain maps to 1451 to 1559 (CGGNLTGPAG…SGFAIEFKEK (109 aa)). N-linked (GlcNAc...) asparagine glycosylation is found at N1454 and N1572. In terms of domain architecture, Sushi 9 spans 1562-1623 (EACFDPGNIM…WDQVLPSCNA (62 aa)). Positions 1625 to 1733 (CGGQYTGSEG…RGFHFVYQAV (109 aa)) constitute a CUB 10 domain. N1644 is a glycosylation site (N-linked (GlcNAc...) asparagine). Residues 1739–1800 (TQCSSVPEPR…WNDTIPSCVV (62 aa)) enclose the Sushi 10 domain. Residues N1792, N1805, and N1882 are each glycosylated (N-linked (GlcNAc...) asparagine). Residues 1802–1910 (CSGNFTQRRG…AGFHLEYKTV (109 aa)) form the CUB 11 domain. Residues 1913-1972 (AACQEPALPSNSIKIGDRYMVNDVLSFQCEPGYTLQGRSHISCMPGTVRRWNYPSPLCIA) enclose the Sushi 11 domain. 3 cysteine pairs are disulfide-bonded: C1915–C1955, C1941–C1970, and C1974–C2000. Residues 1974 to 2082 (CGGTLSTLGG…QGFKLAYQAY (109 aa)) enclose the CUB 12 domain. N-linked (GlcNAc...) asparagine glycosylation occurs at N2018. The 60-residue stretch at 2085–2144 (QNCPDPPPFQNGYMINSDYSVGQSVSFECYPGYILIGHPVLTCQHGINRNWNYPFPRCDA) folds into the Sushi 12 domain. 3 disulfides stabilise this stretch: C2087/C2127, C2113/C2142, and C2146/C2172. A CUB 13 domain is found at 2146–2257 (CGYNVTSQNG…LNFHAFQLKK (112 aa)). N-linked (GlcNAc...) asparagine glycosylation is found at N2149, N2154, and N2187. Residues 2256–2317 (KKCQPPPAVP…FEGSLPTCEA (62 aa)) form the Sushi 13 domain. Intrachain disulfides connect C2258/C2300, C2286/C2315, and C2319/C2347. One can recognise a CUB 14 domain in the interval 2319–2430 (CPANEVRTGS…KGFKIRYAAP (112 aa)). Residues N2358, N2394, N2400, N2445, N2470, and N2503 are each glycosylated (N-linked (GlcNAc...) asparagine). Sushi domains lie at 2430–2492 (PYCS…LCQA), 2493–2554 (VSCG…TCKP), 2555–2619 (VACP…SCRV), 2620–2677 (ISCG…RCLA), 2678–2735 (GHCG…VCVP), 2736–2793 (ITCG…TCRV), 2794–2856 (VNCS…KCLA), 2857–2914 (ISCG…HCTG), 2918–2975 (GFCG…VCEA), 2976–3034 (VSCG…DCTI), 3035–3094 (ISCG…VCKA), 3095–3152 (VLCP…QCLP), 3153–3210 (VFCG…TCID), 3214–3272 (NTCP…ECIP), and 3273–3332 (HACR…VCKS). Disulfide bonds link C2432-C2473, C2459-C2490, C2495-C2537, C2521-C2552, C2557-C2602, C2588-C2617, C2622-C2662, C2648-C2675, C2680-C2720, C2706-C2733, C2738-C2778, and C2764-C2791. The N-linked (GlcNAc...) asparagine glycan is linked to N2605. N-linked (GlcNAc...) asparagine glycans are attached at residues N2750 and N2761. N2795 is a glycosylation site (N-linked (GlcNAc...) asparagine). Cystine bridges form between C2796/C2841, C2827/C2854, C2859/C2899, C2885/C2912, C2920/C2960, C2946/C2973, C2978/C3019, C3005/C3032, C3037/C3079, C3063/C3092, C3097/C3137, C3123/C3150, C3155/C3195, C3181/C3208, C3216/C3257, C3243/C3270, C3275/C3317, and C3302/C3330. A glycan (N-linked (GlcNAc...) asparagine) is linked at N2894. N-linked (GlcNAc...) asparagine glycosylation occurs at N2963. N3022 and N3056 each carry an N-linked (GlcNAc...) asparagine glycan. N-linked (GlcNAc...) asparagine glycosylation is present at N3105. N-linked (GlcNAc...) asparagine glycans are attached at residues N3228 and N3260. N-linked (GlcNAc...) asparagine glycosylation is found at N3339, N3379, and N3386. Residues 3488–3508 (VAAAILVPFFALILSGFAFYL) form a helical membrane-spanning segment. The Cytoplasmic portion of the chain corresponds to 3509–3564 (YKHRTRPKVQYNGYAGHENSNGQASFENPMYDTNLKPTEAKAVRFDTTLNTVCTVV).

The protein belongs to the CSMD family. Weakly expressed in most tissues, except in brain. Expressed at intermediate level in brain, including cerebellum, substantia nigra, hippocampus and fetal brain.

It is found in the membrane. Potential suppressor of squamous cell carcinomas. This Homo sapiens (Human) protein is CUB and sushi domain-containing protein 1 (CSMD1).